We begin with the raw amino-acid sequence, 30 residues long: Photosystem I reaction center subunit XII (30 aa).

A helical transmembrane segment spans residues 7–29 (VYTVLLIALLASVLAIRLGSTLY).

This sequence belongs to the PsaM family.

Its subcellular location is the plastid. It is found in the chloroplast thylakoid membrane. The polypeptide is Photosystem I reaction center subunit XII (Trieres chinensis (Marine centric diatom)).